The chain runs to 394 residues: Guanine nucleotide-binding protein G(s) subunit alpha (394 aa).

The interval 1–23 (MGCLGNSKTEDQRNEEKAQREAN) is disordered. A lipid anchor (N-palmitoyl glycine) is attached at Gly-2. Cys-3 is lipidated: S-palmitoyl cysteine. Basic and acidic residues predominate over residues 8-23 (KTEDQRNEEKAQREAN). The region spanning 39-394 (ATHRLLLLGA…RMHLRQYELL (356 aa)) is the G-alpha domain. The tract at residues 42–55 (RLLLLGAGESGKST) is G1 motif. 47-55 (GAGESGKST) contacts GTP. Ser-54 contributes to the Mg(2+) binding site. The tract at residues 68–91 (FNGEGGEEDPQAARSNSDGEKATK) is disordered. A G2 motif region spans residues 196 to 204 (DLLRCRVLT). GTP contacts are provided by residues 197–204 (LLRCRVLT), 223–227 (DVGGQ), 292–295 (NKQD), and Ala-366. Position 204 (Thr-204) interacts with Mg(2+). The interval 219–228 (FHMFDVGGQR) is G3 motif. The segment at 288-295 (ILFLNKQD) is G4 motif. Residues 364–369 (TCAVDT) are G5 motif.

The protein belongs to the G-alpha family. G(s) subfamily. In terms of assembly, heterotrimeric G proteins are composed of 3 units; alpha, beta and gamma. The alpha chain contains the guanine nucleotide binding site. Interacts with CRY1; the interaction may block GPCR-mediated regulation of cAMP concentrations. Interacts with ADCY6 and stimulates its adenylyl cyclase activity. Interacts with ADCY2 and ADCY5. Stimulates the ADCY5 adenylyl cyclase activity. Interaction with SASH1.

It localises to the cell membrane. In terms of biological role, guanine nucleotide-binding proteins (G proteins) function as transducers in numerous signaling pathways controlled by G protein-coupled receptors (GPCRs). Signaling involves the activation of adenylyl cyclases, resulting in increased levels of the signaling molecule cAMP. GNAS functions downstream of several GPCRs, including beta-adrenergic receptors. Stimulates the Ras signaling pathway via RAPGEF2. The polypeptide is Guanine nucleotide-binding protein G(s) subunit alpha (GNAS) (Canis lupus familiaris (Dog)).